A 352-amino-acid chain; its full sequence is Protein-glutamate methylesterase/protein-glutamine glutaminase 2 (352 aa).

The Response regulatory domain maps to 1 to 116 (MIVDDSAIVR…KDFIQDAASD (116 aa)). Asp-50 is modified (4-aspartylphosphate). Positions 159-351 (SKTTEHVVAI…QEIMRYAHLK (193 aa)) constitute a CheB-type methylesterase domain. Active-site residues include Ser-171, His-197, and Asp-293.

Belongs to the CheB family. Phosphorylated by CheA. Phosphorylation of the N-terminal regulatory domain activates the methylesterase activity.

It is found in the cytoplasm. It carries out the reaction [protein]-L-glutamate 5-O-methyl ester + H2O = L-glutamyl-[protein] + methanol + H(+). The catalysed reaction is L-glutaminyl-[protein] + H2O = L-glutamyl-[protein] + NH4(+). In terms of biological role, involved in chemotaxis. Part of a chemotaxis signal transduction system that modulates chemotaxis in response to various stimuli. Catalyzes the demethylation of specific methylglutamate residues introduced into the chemoreceptors (methyl-accepting chemotaxis proteins or MCP) by CheR. Also mediates the irreversible deamidation of specific glutamine residues to glutamic acid. The sequence is that of Protein-glutamate methylesterase/protein-glutamine glutaminase 2 from Shewanella denitrificans (strain OS217 / ATCC BAA-1090 / DSM 15013).